A 347-amino-acid polypeptide reads, in one-letter code: GMP reductase (347 aa).

Residue 108-131 (DDFTKTRQILAMSSALRFICVDVA) coordinates NADP(+). Positions 181 and 183 each coordinate K(+). The active-site Thioimidate intermediate is the C186. 216–239 (IVGDGGCTCPGDVAKAFGGGADFV) serves as a coordination point for NADP(+).

It belongs to the IMPDH/GMPR family. GuaC type 1 subfamily. Homotetramer.

It catalyses the reaction IMP + NH4(+) + NADP(+) = GMP + NADPH + 2 H(+). Catalyzes the irreversible NADPH-dependent deamination of GMP to IMP. It functions in the conversion of nucleobase, nucleoside and nucleotide derivatives of G to A nucleotides, and in maintaining the intracellular balance of A and G nucleotides. The chain is GMP reductase from Aeromonas hydrophila subsp. hydrophila (strain ATCC 7966 / DSM 30187 / BCRC 13018 / CCUG 14551 / JCM 1027 / KCTC 2358 / NCIMB 9240 / NCTC 8049).